The following is a 374-amino-acid chain: Queuine tRNA-ribosyltransferase (374 aa).

Residue aspartate 89 is the Proton acceptor of the active site. Substrate is bound by residues 89 to 93, aspartate 143, glutamine 187, and glycine 214; that span reads DSGGF. The interval 245-251 is RNA binding; sequence GVGKPED. Aspartate 264 acts as the Nucleophile in catalysis. The segment at 269-273 is RNA binding; important for wobble base 34 recognition; sequence TRNAR. Residues cysteine 302, cysteine 304, cysteine 307, and histidine 333 each coordinate Zn(2+).

The protein belongs to the queuine tRNA-ribosyltransferase family. Homodimer. Within each dimer, one monomer is responsible for RNA recognition and catalysis, while the other monomer binds to the replacement base PreQ1. It depends on Zn(2+) as a cofactor.

It catalyses the reaction 7-aminomethyl-7-carbaguanine + guanosine(34) in tRNA = 7-aminomethyl-7-carbaguanosine(34) in tRNA + guanine. Its pathway is tRNA modification; tRNA-queuosine biosynthesis. Catalyzes the base-exchange of a guanine (G) residue with the queuine precursor 7-aminomethyl-7-deazaguanine (PreQ1) at position 34 (anticodon wobble position) in tRNAs with GU(N) anticodons (tRNA-Asp, -Asn, -His and -Tyr). Catalysis occurs through a double-displacement mechanism. The nucleophile active site attacks the C1' of nucleotide 34 to detach the guanine base from the RNA, forming a covalent enzyme-RNA intermediate. The proton acceptor active site deprotonates the incoming PreQ1, allowing a nucleophilic attack on the C1' of the ribose to form the product. After dissociation, two additional enzymatic reactions on the tRNA convert PreQ1 to queuine (Q), resulting in the hypermodified nucleoside queuosine (7-(((4,5-cis-dihydroxy-2-cyclopenten-1-yl)amino)methyl)-7-deazaguanosine). This Photorhabdus laumondii subsp. laumondii (strain DSM 15139 / CIP 105565 / TT01) (Photorhabdus luminescens subsp. laumondii) protein is Queuine tRNA-ribosyltransferase.